Reading from the N-terminus, the 145-residue chain is Large ribosomal subunit protein uL15 (145 aa).

Residues Met-1–Glu-52 are disordered. 2 stretches are compositionally biased toward gly residues: residues Arg-21–Val-35 and Ser-42–Glu-52.

This sequence belongs to the universal ribosomal protein uL15 family. Part of the 50S ribosomal subunit.

Functionally, binds to the 23S rRNA. The chain is Large ribosomal subunit protein uL15 from Aeromonas hydrophila subsp. hydrophila (strain ATCC 7966 / DSM 30187 / BCRC 13018 / CCUG 14551 / JCM 1027 / KCTC 2358 / NCIMB 9240 / NCTC 8049).